Consider the following 484-residue polypeptide: Zinc metalloproteinase/disintegrin PMMP-2 (484 aa).

The N-terminal stretch at Met-1–Ser-20 is a signal peptide. Positions Ile-21–Leu-190 are excised as a propeptide. In terms of domain architecture, Peptidase M12B spans Arg-197 to Pro-395. N-linked (GlcNAc...) asparagine glycosylation is present at Asn-239. Disulfide bonds link Cys-308/Cys-390, Cys-352/Cys-374, and Cys-354/Cys-357. Residue His-333 coordinates Zn(2+). Glu-334 is an active-site residue. Zn(2+) is bound by residues His-337 and His-343. Residues Leu-396 to Ala-413 constitute a propeptide that is removed on maturation. In terms of domain architecture, Disintegrin spans Thr-403–Gly-484. Disulfide bonds link Cys-417–Cys-432, Cys-419–Cys-427, Cys-426–Cys-449, Cys-440–Cys-446, Cys-445–Cys-470, and Cys-458–Cys-477. Positions Arg-462 to Asp-464 match the Cell attachment site motif.

It belongs to the venom metalloproteinase (M12B) family. P-II subfamily. P-IIa sub-subfamily. Monomer. Requires Zn(2+) as cofactor. In terms of tissue distribution, expressed by the venom gland.

It localises to the secreted. In terms of biological role, impairs hemostasis in the envenomed animal. Functionally, inhibits platelet aggregation induced by ADP, thrombin, platelet-activating factor and collagen. Acts by inhibiting fibrinogen interaction with platelet receptors GPIIb/GPIIIa (ITGA2B/ITGB3). The protein is Zinc metalloproteinase/disintegrin PMMP-2 of Protobothrops mucrosquamatus (Taiwan habu).